A 312-amino-acid chain; its full sequence is Homoserine O-acetyltransferase (312 aa).

Catalysis depends on Cys-142, which acts as the Acyl-thioester intermediate. Residues Lys-163 and Ser-192 each contribute to the substrate site. His-235 acts as the Proton acceptor in catalysis. Glu-237 is a catalytic residue. Arg-249 provides a ligand contact to substrate.

The protein belongs to the MetA family.

The protein localises to the cytoplasm. It catalyses the reaction L-homoserine + acetyl-CoA = O-acetyl-L-homoserine + CoA. It functions in the pathway amino-acid biosynthesis; L-methionine biosynthesis via de novo pathway; O-acetyl-L-homoserine from L-homoserine: step 1/1. In terms of biological role, transfers an acetyl group from acetyl-CoA to L-homoserine, forming acetyl-L-homoserine. The sequence is that of Homoserine O-acetyltransferase from Ruegeria sp. (strain TM1040) (Silicibacter sp.).